The sequence spans 776 residues: Lysyl oxidase homolog 2 (776 aa).

Residues 1–25 (MELHFGSCLSGCLALLVLLPSLSLA) form the signal peptide. SRCR domains are found at residues 61–162 (VRLA…VVCS), 191–305 (IRPI…VSCV), 329–428 (VRLR…VRCN), and 438–546 (VRLN…VACS). 9 cysteine pairs are disulfide-bonded: cysteine 87-cysteine 151, cysteine 100-cysteine 161, cysteine 131-cysteine 141, cysteine 221-cysteine 294, cysteine 234-cysteine 304, cysteine 268-cysteine 278, cysteine 354-cysteine 417, cysteine 367-cysteine 427, and cysteine 398-cysteine 408. The N-linked (GlcNAc...) asparagine glycan is linked to asparagine 267. The N-linked (GlcNAc...) asparagine glycan is linked to asparagine 291. Residue asparagine 458 is glycosylated (N-linked (GlcNAc...) asparagine). 3 disulfides stabilise this stretch: cysteine 467-cysteine 532, cysteine 480-cysteine 545, and cysteine 514-cysteine 524. Residues 550 to 753 (PDLVLNAEIV…WMYNCHVGGA (204 aa)) form a lysyl-oxidase like region. Ca(2+) is bound by residues aspartate 551 and leucine 552. 4 disulfide bridges follow: cysteine 575–cysteine 627, cysteine 581–cysteine 697, cysteine 659–cysteine 675, and cysteine 665–cysteine 687. 3 residues coordinate Cu cation: histidine 628, histidine 630, and histidine 632. An N-linked (GlcNAc...) asparagine glycan is attached at asparagine 646. The lysine tyrosylquinone (Lys-Tyr) cross-link spans 655–691 (KASFCLEDTECEGDIQKSYECANFGEQGITMGCWDMY). Tyrosine 691 bears the 2',4',5'-topaquinone mark. Ca(2+)-binding residues include glutamate 724, aspartate 726, asparagine 729, and asparagine 730. Cysteines 734 and 748 form a disulfide.

The protein belongs to the lysyl oxidase family. As to quaternary structure, component of some chromatin repressor complex. Interacts with SNAI1. Interacts with TAF10. Interacts with HSPA5. Interacts with EFEMP2. It depends on Cu cation as a cofactor. Lysine tyrosylquinone residue serves as cofactor. In terms of processing, the lysine tyrosylquinone cross-link (LTQ) is generated by condensation of the epsilon-amino group of a lysine with a topaquinone produced by oxidation of tyrosine. Post-translationally, N-glycosylated. N-glycosylation on Asn-458 and Asn-646 may be essential for proper folding and secretion; may be composed of a fucosylated carbohydrates attached to a trimannose N-linked glycan core. In terms of tissue distribution, ubiquitous. Highest expression in skin, lung and thymus. Present in chondrocytes: mainly expressed by chondrocytes in healing fractures and in epiphyseal growth plates (at protein level).

The protein localises to the secreted. It localises to the extracellular space. It is found in the extracellular matrix. The protein resides in the basement membrane. Its subcellular location is the nucleus. The protein localises to the chromosome. It localises to the endoplasmic reticulum. The catalysed reaction is L-lysyl-[protein] + O2 + H2O = (S)-2-amino-6-oxohexanoyl-[protein] + H2O2 + NH4(+). Its activity is regulated as follows. Specifically inhibited by a mouse monoclonal antibody AB0023, inhibition occurs in a non-competitive manner. Its function is as follows. Mediates the post-translational oxidative deamination of lysine residues on target proteins leading to the formation of deaminated lysine (allysine). Acts as a transcription corepressor and specifically mediates deamination of trimethylated 'Lys-4' of histone H3 (H3K4me3), a specific tag for epigenetic transcriptional activation. Shows no activity against histone H3 when it is trimethylated on 'Lys-9' (H3K9me3) or 'Lys-27' (H3K27me3) or when 'Lys-4' is monomethylated (H3K4me1) or dimethylated (H3K4me2). Also mediates deamination of methylated TAF10, a member of the transcription factor IID (TFIID) complex, which induces release of TAF10 from promoters, leading to inhibition of TFIID-dependent transcription. LOXL2-mediated deamination of TAF10 results in transcriptional repression of genes required for embryonic stem cell pluripotency including POU5F1/OCT4, NANOG, KLF4 and SOX2. Involved in epithelial to mesenchymal transition (EMT) via interaction with SNAI1 and participates in repression of E-cadherin, probably by mediating deamination of histone H3. During EMT, involved with SNAI1 in negatively regulating pericentromeric heterochromatin transcription. SNAI1 recruits LOXL2 to pericentromeric regions to oxidize histone H3 and repress transcription which leads to release of heterochromatin component CBX5/HP1A, enabling chromatin reorganization and acquisition of mesenchymal traits. Interacts with the endoplasmic reticulum protein HSPA5 which activates the IRE1-XBP1 pathway of the unfolded protein response, leading to expression of several transcription factors involved in EMT and subsequent EMT induction. When secreted into the extracellular matrix, promotes cross-linking of extracellular matrix proteins by mediating oxidative deamination of peptidyl lysine residues in precursors to fibrous collagen and elastin. Acts as a regulator of sprouting angiogenesis, probably via collagen IV scaffolding. Acts as a regulator of chondrocyte differentiation, probably by regulating expression of factors that control chondrocyte differentiation. This Mus musculus (Mouse) protein is Lysyl oxidase homolog 2 (Loxl2).